A 310-amino-acid chain; its full sequence is Olfactory receptor 2A7 (310 aa).

Residues 1–24 are Extracellular-facing; the sequence is MGNNMTLITEFILLGFPLSPRMQM. The N-linked (GlcNAc...) asparagine glycan is linked to Asn4. The chain crosses the membrane as a helical span at residues 25 to 45; sequence LLFALFSLFYAFTLLGNGTIV. Over 46 to 53 the chain is Cytoplasmic; it reads GLICLDSR. The chain crosses the membrane as a helical span at residues 54 to 74; it reads LHTPMYFFLSHLAIVDIAYAC. Topologically, residues 75-96 are extracellular; that stretch reads NTVPQMLVNLLDPVKPISYAGC. An intrachain disulfide couples Cys96 to Cys178. A helical transmembrane segment spans residues 97–117; it reads MTQTFLFLTFAITECLLLVVM. Residues 118–148 are Cytoplasmic-facing; it reads SYDRYVAICHPLRYSAIMSWRVCSTMAVTSW. The helical transmembrane segment at 149-169 threads the bilayer; sequence IIGVLLSLIHLVLLLPLPFCV. Residues 170 to 204 are Extracellular-facing; the sequence is SQKVNHFFCEITAILKLACADTHLNETMVLAGAVS. Residue Asn194 is glycosylated (N-linked (GlcNAc...) asparagine). The helical transmembrane segment at 205-225 threads the bilayer; that stretch reads VLVGPFSSIVVSYACILGAIL. Residues 226-239 are Cytoplasmic-facing; it reads KIQSEEGQRKAFST. A helical transmembrane segment spans residues 240–260; that stretch reads CSSHLCVVGLFYGTAIVMYVG. Residues 261-273 lie on the Extracellular side of the membrane; it reads PRHGSPKEQKKYL. The chain crosses the membrane as a helical span at residues 274-291; that stretch reads LLFHSLFNPMLNPLIYSL. Over 292–310 the chain is Cytoplasmic; the sequence is RNSDVKNTLKRVLRTQRAL.

It belongs to the G-protein coupled receptor 1 family. As to expression, olfactory epithelium.

It is found in the cell membrane. Its function is as follows. Odorant receptor. This Mus musculus (Mouse) protein is Olfactory receptor 2A7.